The chain runs to 599 residues: DNA-directed RNA polymerase III subunit RPC3 (599 aa).

The interval 335-371 (PRLDGLRPRGKGSRSVSPRPQSKRVKTEEGYTKTGDY) is disordered. The span at 359 to 371 (VKTEEGYTKTGDY) shows a compositional bias: basic and acidic residues. A leucine-zipper region spans residues 526 to 547 (IYKSLSRCFERVAAERAKLPIL).

It belongs to the RNA polymerase beta chain family. Component of the RNA polymerase III (Pol III) complex consisting of 17 subunits.

Its subcellular location is the nucleus. In terms of biological role, DNA-dependent RNA polymerase catalyzes the transcription of DNA into RNA using the four ribonucleoside triphosphates as substrates. Specific core component of RNA polymerase III which synthesizes small RNAs, such as 5S rRNA and tRNAs. The polypeptide is DNA-directed RNA polymerase III subunit RPC3 (RPC82) (Yarrowia lipolytica (strain CLIB 122 / E 150) (Yeast)).